We begin with the raw amino-acid sequence, 364 residues long: Dihydroorotate dehydrogenase (quinone) (364 aa).

FMN-binding positions include 61-65 (AGFDK) and S85. K65 serves as a coordination point for substrate. 110–114 (NRMGF) contributes to the substrate binding site. The FMN site is built by N139 and N170. Residue N170 coordinates substrate. The Nucleophile role is filled by S173. Substrate is bound at residue N175. Positions 214 and 242 each coordinate FMN. 243–244 (NT) contacts substrate. FMN contacts are provided by residues G266, G295, and 316–317 (YS).

This sequence belongs to the dihydroorotate dehydrogenase family. Type 2 subfamily. As to quaternary structure, monomer. The cofactor is FMN.

It localises to the cell membrane. The catalysed reaction is (S)-dihydroorotate + a quinone = orotate + a quinol. It functions in the pathway pyrimidine metabolism; UMP biosynthesis via de novo pathway; orotate from (S)-dihydroorotate (quinone route): step 1/1. Functionally, catalyzes the conversion of dihydroorotate to orotate with quinone as electron acceptor. The polypeptide is Dihydroorotate dehydrogenase (quinone) (Bradyrhizobium sp. (strain ORS 278)).